Reading from the N-terminus, the 329-residue chain is 4-hydroxythreonine-4-phosphate dehydrogenase (329 aa).

Substrate is bound by residues H136 and T137. Positions 166, 211, and 266 each coordinate a divalent metal cation. Substrate is bound by residues K274, N283, and R292.

It belongs to the PdxA family. In terms of assembly, homodimer. It depends on Zn(2+) as a cofactor. The cofactor is Mg(2+). Requires Co(2+) as cofactor.

The protein resides in the cytoplasm. The enzyme catalyses 4-(phosphooxy)-L-threonine + NAD(+) = 3-amino-2-oxopropyl phosphate + CO2 + NADH. Its pathway is cofactor biosynthesis; pyridoxine 5'-phosphate biosynthesis; pyridoxine 5'-phosphate from D-erythrose 4-phosphate: step 4/5. Its function is as follows. Catalyzes the NAD(P)-dependent oxidation of 4-(phosphooxy)-L-threonine (HTP) into 2-amino-3-oxo-4-(phosphooxy)butyric acid which spontaneously decarboxylates to form 3-amino-2-oxopropyl phosphate (AHAP). In Neisseria meningitidis serogroup B (strain ATCC BAA-335 / MC58), this protein is 4-hydroxythreonine-4-phosphate dehydrogenase.